A 104-amino-acid chain; its full sequence is Integration host factor subunit beta (104 aa).

Belongs to the bacterial histone-like protein family. Heterodimer of an alpha and a beta chain.

This protein is one of the two subunits of integration host factor, a specific DNA-binding protein that functions in genetic recombination as well as in transcriptional and translational control. The polypeptide is Integration host factor subunit beta (ihfB) (Xylella fastidiosa (strain 9a5c)).